The sequence spans 748 residues: Transcription factor FBD3 (748 aa).

Residues methionine 1–aspartate 10 are compositionally biased toward basic and acidic residues. The disordered stretch occupies residues methionine 1 to arginine 26. A compositionally biased stretch (polar residues) spans glutamine 11–proline 21. Positions cysteine 32–cysteine 59 form a DNA-binding region, zn(2)-C6 fungal-type. Disordered stretches follow at residues glycine 116–proline 160 and isoleucine 417–asparagine 438. Positions alanine 131–alanine 141 are enriched in low complexity. Polar residues predominate over residues serine 429–asparagine 438.

The protein localises to the nucleus. Transcription factor; part of the Fusarium detoxification of benzoxazolinone cluster 2 (FDB2) involved in the degradation of benzoxazolinones produced by the host plant. Maize, wheat, and rye produce the 2 benzoxazinone phytoanticipins 2,4-dihy-droxy-7-methoxy-1,4-benzoxazin-3-one (DIMBOA) and 2,4-dihydroxy-1,4-benzoxazin-3-one (DIBOA) that, due to their inherent instability once released, spontaneously degrade to the more stable corresponding benzoxazolinones, 6-methoxy-2-benzoxazolinone (MBOA) and 2-benzoxazolinone (BOA), respectively. FDB3 is not essentiel, but contributes to efficient BOA biotransformation. The protein is Transcription factor FBD3 of Gibberella moniliformis (strain M3125 / FGSC 7600) (Maize ear and stalk rot fungus).